A 430-amino-acid polypeptide reads, in one-letter code: Phosphomethylpyrimidine synthase (430 aa).

Substrate is bound by residues N68, M96, Y125, H164, 186–188, 227–230, and E266; these read SRG and DALR. H270 serves as a coordination point for Zn(2+). Residue Y293 participates in substrate binding. H334 contacts Zn(2+). 3 residues coordinate [4Fe-4S] cluster: C410, C413, and C417.

This sequence belongs to the ThiC family. [4Fe-4S] cluster is required as a cofactor.

It catalyses the reaction 5-amino-1-(5-phospho-beta-D-ribosyl)imidazole + S-adenosyl-L-methionine = 4-amino-2-methyl-5-(phosphooxymethyl)pyrimidine + CO + 5'-deoxyadenosine + formate + L-methionine + 3 H(+). It participates in cofactor biosynthesis; thiamine diphosphate biosynthesis. Catalyzes the synthesis of the hydroxymethylpyrimidine phosphate (HMP-P) moiety of thiamine from aminoimidazole ribotide (AIR) in a radical S-adenosyl-L-methionine (SAM)-dependent reaction. This Pyrobaculum aerophilum (strain ATCC 51768 / DSM 7523 / JCM 9630 / CIP 104966 / NBRC 100827 / IM2) protein is Phosphomethylpyrimidine synthase.